Reading from the N-terminus, the 171-residue chain is Nicotinamide-nucleotide adenylyltransferase (171 aa).

This sequence belongs to the archaeal NMN adenylyltransferase family.

The protein resides in the cytoplasm. The enzyme catalyses beta-nicotinamide D-ribonucleotide + ATP + H(+) = diphosphate + NAD(+). It functions in the pathway cofactor biosynthesis; NAD(+) biosynthesis; NAD(+) from nicotinamide D-ribonucleotide: step 1/1. This chain is Nicotinamide-nucleotide adenylyltransferase, found in Methanococcus maripaludis (strain DSM 14266 / JCM 13030 / NBRC 101832 / S2 / LL).